The following is a 261-amino-acid chain: MILDEIIKRTKEDLKKRKSDYPAQWLGRSLAYNPYVPRDVASALSSSAKEPLRIIAEVKKASPSKGVIRENFEPIRIAKEYEDAGANAISVLTEPHWFKGDIEYITQIRRYTATPLLRKDFIVDEYQILEALVYGADFILLIAKALSSKELKGLLAYAHHLGLEVLVETHDAQDVKKAIFAGANIIGINHRNLDDFSMDMSLCERLIPLLPNGKIIVAESGLYEHEQLKELNRIGVDAFLIGEHFMRQEDIKTAVKNIKEG.

It belongs to the TrpC family.

It carries out the reaction 1-(2-carboxyphenylamino)-1-deoxy-D-ribulose 5-phosphate + H(+) = (1S,2R)-1-C-(indol-3-yl)glycerol 3-phosphate + CO2 + H2O. Its pathway is amino-acid biosynthesis; L-tryptophan biosynthesis; L-tryptophan from chorismate: step 4/5. This chain is Indole-3-glycerol phosphate synthase, found in Campylobacter curvus (strain 525.92).